The primary structure comprises 190 residues: Small ribosomal subunit protein uS5 (190 aa).

The region spanning 21–84 (FADRLVAINR…EQAKRQMIRV (64 aa)) is the S5 DRBM domain. A disordered region spans residues 156 to 190 (KKEQSPRSVAQRRGKKVADILPKRDEAPAAEAAEA). The segment covering 171–182 (KVADILPKRDEA) has biased composition (basic and acidic residues).

It belongs to the universal ribosomal protein uS5 family. Part of the 30S ribosomal subunit. Contacts proteins S4 and S8.

Its function is as follows. With S4 and S12 plays an important role in translational accuracy. Located at the back of the 30S subunit body where it stabilizes the conformation of the head with respect to the body. The chain is Small ribosomal subunit protein uS5 from Ruegeria pomeroyi (strain ATCC 700808 / DSM 15171 / DSS-3) (Silicibacter pomeroyi).